The following is a 116-amino-acid chain: Ribosome-binding factor A (116 aa).

Belongs to the RbfA family. As to quaternary structure, monomer. Binds 30S ribosomal subunits, but not 50S ribosomal subunits or 70S ribosomes.

The protein resides in the cytoplasm. One of several proteins that assist in the late maturation steps of the functional core of the 30S ribosomal subunit. Associates with free 30S ribosomal subunits (but not with 30S subunits that are part of 70S ribosomes or polysomes). Required for efficient processing of 16S rRNA. May interact with the 5'-terminal helix region of 16S rRNA. The sequence is that of Ribosome-binding factor A from Streptococcus mutans serotype c (strain ATCC 700610 / UA159).